The following is a 291-amino-acid chain: Formamidopyrimidine-DNA glycosylase (291 aa).

The Schiff-base intermediate with DNA role is filled by Pro2. Catalysis depends on Glu3, which acts as the Proton donor. Lys58 serves as the catalytic Proton donor; for beta-elimination activity. DNA-binding residues include His104, Arg123, and Lys166. The segment at Lys257–Lys291 adopts an FPG-type zinc-finger fold. The active-site Proton donor; for delta-elimination activity is Arg281.

Belongs to the FPG family. Monomer. Zn(2+) serves as cofactor.

It carries out the reaction Hydrolysis of DNA containing ring-opened 7-methylguanine residues, releasing 2,6-diamino-4-hydroxy-5-(N-methyl)formamidopyrimidine.. The enzyme catalyses 2'-deoxyribonucleotide-(2'-deoxyribose 5'-phosphate)-2'-deoxyribonucleotide-DNA = a 3'-end 2'-deoxyribonucleotide-(2,3-dehydro-2,3-deoxyribose 5'-phosphate)-DNA + a 5'-end 5'-phospho-2'-deoxyribonucleoside-DNA + H(+). Its function is as follows. Involved in base excision repair of DNA damaged by oxidation or by mutagenic agents. Acts as a DNA glycosylase that recognizes and removes damaged bases. Has a preference for oxidized purines, such as 7,8-dihydro-8-oxoguanine (8-oxoG). Has AP (apurinic/apyrimidinic) lyase activity and introduces nicks in the DNA strand. Cleaves the DNA backbone by beta-delta elimination to generate a single-strand break at the site of the removed base with both 3'- and 5'-phosphates. The protein is Formamidopyrimidine-DNA glycosylase of Rhodopseudomonas palustris (strain TIE-1).